We begin with the raw amino-acid sequence, 352 residues long: Speedy protein E16 (352 aa).

A disordered region spans residues M1–P90. The span at I18–S40 shows a compositional bias: polar residues. Residues D76 to P90 show a composition bias toward acidic residues.

Belongs to the Speedy/Ringo family.

This Homo sapiens (Human) protein is Speedy protein E16.